Consider the following 343-residue polypeptide: MTNFYKVFLAVFILVCCNISHAVVSFIGSTENDVGPSQGSYSSTHAMDNLPFVYNTGYNIGYQNANVWRIGGGFCVGLDGKVDLPVVGSLDGQSIYGLTEEVGLLIWMGDTNYSRGTAMSGNSWENVFSGWCVGNYLSTQGLSVHVRPVILKRNSSAQYSVQKTSIGSIRMRPYNGSSAGSVQTTVNFSLNPFTLNDTVTSCRLLTPSAVNVSLAAISAGQLPSSGDEVVAGTTSLKLQCDAGVTVWATLTDATTPSNRSDILTLTGASTATGVGLRIYKNTDSTPLKFGPDSPVKGNENQWQLSTGTETSPSVRLYVKYVNTGEGINPGTVNGISTFTFSYQ.

An N-terminal signal peptide occupies residues 1–22; that stretch reads MTNFYKVFLAVFILVCCNISHA. The receptor-binding lectin domain stretch occupies residues 23–199; the sequence is VVSFIGSTEN…LNPFTLNDTV (177 aa). Residues 65–66, 110–111, and 138–141 contribute to the a carbohydrate site; these read AN, DT, and STQG. The cysteines at positions 75 and 132 are disulfide-linked. The interval 200–343 is fimbrillin-binding domain; sequence TSCRLLTPSA…GISTFTFSYQ (144 aa). The tract at residues 287 to 307 is disordered; sequence LKFGPDSPVKGNENQWQLSTG. Over residues 298-307 the composition is skewed to polar residues; the sequence is NENQWQLSTG.

The protein belongs to the fimbrial protein family.

Its subcellular location is the fimbrium. In terms of biological role, essential fimbrial adhesion factor that mediates binding to N-acetylglucosamine-containing receptors in the host intestinal microvilli, leading to colonization of the intestinal tissue, and diarrhea or septicemia. Also confers adhesiveness to laminin and basement membranes. The polypeptide is F17b-G fimbrial adhesin (f17bG) (Escherichia coli).